The primary structure comprises 332 residues: NADH-quinone oxidoreductase subunit H (332 aa).

The next 9 helical transmembrane spans lie at 4–24 (FAFFALEALIKCIIIIAIFAS), 44–64 (IGPDMVGPFGLIQLVADMIKL), 78–98 (FIFAIAPLISAICAFVSLAAI), 120–140 (VALLFVIGTSGLCFYAVFLGG), 165–185 (VGALALIAIVMLVGSFSLVDI), 194–214 (FSWLIFKQPLAFVLFIIALFI), 255–275 (IAGAILVTLLFLGGFNSFWII), 279–299 (IMMIVKSSFIFFWYFWARAAF), and 312–332 (YLILIPLAVLNLLITALAVLL).

It belongs to the complex I subunit 1 family. In terms of assembly, NDH-1 is composed of 14 different subunits. Subunits NuoA, H, J, K, L, M, N constitute the membrane sector of the complex.

The protein localises to the cell inner membrane. The catalysed reaction is a quinone + NADH + 5 H(+)(in) = a quinol + NAD(+) + 4 H(+)(out). In terms of biological role, NDH-1 shuttles electrons from NADH, via FMN and iron-sulfur (Fe-S) centers, to quinones in the respiratory chain. The immediate electron acceptor for the enzyme in this species is believed to be ubiquinone. Couples the redox reaction to proton translocation (for every two electrons transferred, four hydrogen ions are translocated across the cytoplasmic membrane), and thus conserves the redox energy in a proton gradient. This subunit may bind ubiquinone. In Campylobacter jejuni (strain RM1221), this protein is NADH-quinone oxidoreductase subunit H.